The following is a 248-amino-acid chain: MPKLVLVRHGQSEWNEKNLFTGWVDVRLSETGQKEAKRAGELLKEAGINVDVLHTSKLSRAIQTANIALDAADQLYVPVKRSWRLNERHYGALQGKDKAQTLEAYGQEKFQIWRRSFDVPPPKIDPKDEYSQVGDRRYADVDPAVVPLTESLALVIDRLLPYWQDEIAGDLLAGKVVLIAAHGNSLRALVKHLDNISDEDIAGLNIPTGIPLVYELDENLKPTKPSYYLDPEAAAAGAAAVAAQGQKK.

Substrate contacts are provided by residues 8–15 (RHGQSEWN), 21–22 (TG), R60, 87–90 (ERHY), K98, 114–115 (RR), and 183–184 (GN). The active-site Tele-phosphohistidine intermediate is the H9. The Proton donor/acceptor role is filled by E87.

Belongs to the phosphoglycerate mutase family. BPG-dependent PGAM subfamily.

The protein resides in the cytoplasm. It carries out the reaction (2R)-2-phosphoglycerate = (2R)-3-phosphoglycerate. It participates in carbohydrate degradation; glycolysis; pyruvate from D-glyceraldehyde 3-phosphate: step 3/5. The protein is Phosphoglycerate mutase (GPM1) of Candida albicans (strain SC5314 / ATCC MYA-2876) (Yeast).